A 341-amino-acid chain; its full sequence is tRNA N6-adenosine threonylcarbamoyltransferase (341 aa).

Fe cation is bound by residues His115 and His119. Substrate contacts are provided by residues 137–141 (IVSGG), Asp170, Gly183, Asp187, and Asn276. Asp304 lines the Fe cation pocket.

It belongs to the KAE1 / TsaD family. Fe(2+) is required as a cofactor.

It localises to the cytoplasm. It carries out the reaction L-threonylcarbamoyladenylate + adenosine(37) in tRNA = N(6)-L-threonylcarbamoyladenosine(37) in tRNA + AMP + H(+). Functionally, required for the formation of a threonylcarbamoyl group on adenosine at position 37 (t(6)A37) in tRNAs that read codons beginning with adenine. Is involved in the transfer of the threonylcarbamoyl moiety of threonylcarbamoyl-AMP (TC-AMP) to the N6 group of A37, together with TsaE and TsaB. TsaD likely plays a direct catalytic role in this reaction. In Staphylococcus aureus (strain JH1), this protein is tRNA N6-adenosine threonylcarbamoyltransferase.